The following is a 326-amino-acid chain: GTP 3',8-cyclase (326 aa).

The Radical SAM core domain occupies serine 6–glutamate 220. Residue arginine 15 coordinates GTP. [4Fe-4S] cluster is bound by residues cysteine 22 and cysteine 26. An S-adenosyl-L-methionine-binding site is contributed by tyrosine 28. Residue cysteine 29 participates in [4Fe-4S] cluster binding. Residue arginine 65 participates in GTP binding. Residue glycine 69 coordinates S-adenosyl-L-methionine. Threonine 96 contacts GTP. Residue serine 120 participates in S-adenosyl-L-methionine binding. Lysine 157 is a binding site for GTP. An S-adenosyl-L-methionine-binding site is contributed by methionine 191. [4Fe-4S] cluster is bound by residues cysteine 254 and cysteine 257. Residue arginine 259–arginine 261 coordinates GTP. Cysteine 271 provides a ligand contact to [4Fe-4S] cluster.

Belongs to the radical SAM superfamily. MoaA family. In terms of assembly, monomer and homodimer. It depends on [4Fe-4S] cluster as a cofactor.

It carries out the reaction GTP + AH2 + S-adenosyl-L-methionine = (8S)-3',8-cyclo-7,8-dihydroguanosine 5'-triphosphate + 5'-deoxyadenosine + L-methionine + A + H(+). Its pathway is cofactor biosynthesis; molybdopterin biosynthesis. Its function is as follows. Catalyzes the cyclization of GTP to (8S)-3',8-cyclo-7,8-dihydroguanosine 5'-triphosphate. This chain is GTP 3',8-cyclase, found in Geobacter sulfurreducens (strain ATCC 51573 / DSM 12127 / PCA).